A 116-amino-acid polypeptide reads, in one-letter code: Spexin (116 aa).

The N-terminal stretch at 1-26 (MKGPSILAVAALALLLVLSVLENSSG) is a signal peptide. Residues 27–35 (APQRLSEKR) constitute a propeptide that is removed on maturation. Glutamine amide is present on Q49. 2 propeptides span residues 50–116 (GHRF…RFYW) and 74–116 (PNLQ…RFYW). Positions 56 to 73 (DQSRRKELADRPPPERRN) are enriched in basic and acidic residues. Residues 56–75 (DQSRRKELADRPPPERRNPN) are disordered.

Belongs to the spexin family. Widely expressed; predominantly expressed in epithelial cells in the skin, respiratory, digestive, urinary and reproductive systems, retina, adrenal gland and various brain regions. In the adrenal gland, expressed in parenchymal cells of the cortex and in ganglionic cells and intermingled cortical cells of the medulla. Expressed in the type I glomic cells within the carotid body (at protein level). Widely expressed. Strongly expressed in esophagus, liver, pancreas, kidney, brain, hypothalamus, thyroid and ovary. Expressed in the zona glomerulosa (ZG) and zona fasciculata/reticularis (ZF/R) of the adrenal gland. Also expressed in stomach, lung, skeletal muscle, heart, uterus, spleen, adrenal gland and testis. Weakly expressed in small intestine, thymus, urinary bladder and adenohypophysis. In the brain, is expressed in the Barrington's nucleus, with lesser amount in the ventrolateral caudal periaqueductal gray (PAG) and in the mesopontine tegmentum.

The protein localises to the secreted. It localises to the extracellular space. It is found in the cytoplasmic vesicle. The protein resides in the secretory vesicle. In terms of biological role, plays a role as a central modulator of cardiovascular and renal function and nociception. Also plays a role in energy metabolism and storage. Inhibits adrenocortical cell proliferation with minor stimulation on corticosteroid release. Acts as a ligand for galanin receptors GALR2 and GALR3. Intracerebroventricular administration of the peptide induces an increase in arterial blood pressure, a decrease in both heart rate and renal excretion and delayed natriuresis. Intraventricular administration of the peptide induces antinociceptive activity. Intraperitoneal administration of the peptide induces a reduction in food consumption and body weight. Inhibits long chain fatty acid uptake into adipocytes. Also induces contraction of muscarinic-like stomach smooth muscles. Functionally, intracerebroventricular administration of the peptide induces a decrease in heart rate, but no change in arterial pressure, and an increase in urine flow rate. Intraventricular administration of the peptide induces antinociceptive activity. This Rattus norvegicus (Rat) protein is Spexin (SPX).